A 434-amino-acid polypeptide reads, in one-letter code: MSNFSPREIVSELDRFIIGQKDAKRAVAIALRNRWRRQQLEGQMREEVMPKNILMIGPTGVGKTEISRRPAKLAGAPFVKVEATKFTEVGYVGRDVEQIIRDLVEIAITLVREKRREDVKAKAHLNAEERVLDALVGKTASPATRDSFRKKLRNGEMDDKEIEIEVSDSGASPNFEIPGMPGANIGVLNISDMLGKAMGGRTKTRKTTVKDSYPILINDESDKLLDQDQIVQEALRVSEDEGIVFIDEIDKIAAREGGSGAGVSREGVQRDLLPLVEDTTVATKYGPVKTDHILFITSGAFHVSKPSDLLPELQGRLPIRVELSALTREDFRRILTETEASLIKQYIALMETEEVKLEFSDDAIDALADIAVDLNATVENIGARRLQTVMEKVLDEISFTAPDKAGATFIIDAAYVKEKIGGLAKNTDLSRFIL.

ATP is bound by residues Ile-18, 60-65 (GVGKTE), Asp-247, Glu-312, and Arg-384.

It belongs to the ClpX chaperone family. HslU subfamily. A double ring-shaped homohexamer of HslV is capped on each side by a ring-shaped HslU homohexamer. The assembly of the HslU/HslV complex is dependent on binding of ATP.

It localises to the cytoplasm. Functionally, ATPase subunit of a proteasome-like degradation complex; this subunit has chaperone activity. The binding of ATP and its subsequent hydrolysis by HslU are essential for unfolding of protein substrates subsequently hydrolyzed by HslV. HslU recognizes the N-terminal part of its protein substrates and unfolds these before they are guided to HslV for hydrolysis. The sequence is that of ATP-dependent protease ATPase subunit HslU from Brucella ovis (strain ATCC 25840 / 63/290 / NCTC 10512).